The chain runs to 2115 residues: MTLIQTKHSASAAVFSPQSTAPKPTHLAHIRARLLEDDLLKPVKEAVVSLPKTWRALVSKQPELGKNRKASDLIEAFPSWIEDGKTEVLETDMSGLITLPLLAVIHIVQYLDYIQRLGISHSEFLESVESGGVQGYCIGLLSAIVVSSAEDEEALIQHAAHGIRLSLAIGAFGDIGSSSDEVVSNTLQVRLRNAGSEEDLVARFPGSYISTITDAKTMSIIAPPHLIDALKEHAETEGLRPRAMHIRSNLHNSRNTELAQQCSSLFEDCPFASPDTLQVAVRSNKTGCYLEQDATSLVEEAVSTVLASRCDWSLVMQGLADDLNQSGSKHHSILLFGMGDSVPGAPFREHSLDISKIDVLSLVETPLSATPPASSIDDFPPDSIAIVGSACRLPGANSLDELWDLIAAGRSRLEKVRTDRVNIKESYRASQDPEWTKKREFYGNFIDDVDAFDHAFFNISPREAKYMDPQQRLLLMAAFEAMDSSGYLRSHQRNDGDAVGCFLGASYTEYTENTSAYSPSAFTATSTIRAFLSGKISYHFGWTGPSEVIDTACSASIVAVHRAVQAINAGECPVALAGGVNIITGVNNYFDLGKASFLSQTGQCKPFDDSADGYCRADGVGLVVLKPLSKAVADGDYIQGVIPAIATNQGGIGAPGITVPDGIAQKALYRGILEKAGLKGEDISYVEAHGTGTQVGDPIEIGSIREVFGGAHRASPLHLGSLKANIGHSETAAGVASLLKVLSMVRNRGVPPLQGFKRLNHKIPALELDKMAIPTKLLPWDSDHRIACINSYGASGSNSALICSEWLEEPSKLPDVTGQPLQEYPILLSAASNESLLRYARHLADYITKSSADLTLGNLSYTLSQRRKHHRIRWSTTAKDLIGLIEQLRECTPADFVQAPQKSKKIVLTFSGQSRTTIGVSDSARLENPRFEHYIQQCNNILMSYGCPDLLPYLSQTDPISDPTIIQCGTVTVQYACAQCWIDGGLDVAGIVGHSLGELTALAISGALSLEDTLKVVYTRAEAIKAKWGPESGSMLAIHANQDTVKSIVEIIETMITNPDEALEIACYNSITSHIVVGKESSIEMAEKVIQQDARYHGLRYQRLNTSHGFHSRFTEPLLQDLIHVERSVEFRKPSIPLETSTQTPVDFAKKRHSKYLSNHAREPVFFVDAARRLESRLGECVWLEAGWNTPIVAMTKRAVANPSAHTFQAVTSPAAVAMELWREGIATTYWSFFTPKESGLKHIWLPPYSFDRPKYWLEHVDRAVQERDAAANGSASPPPKKVQQLVTLKKTEGTKSQFRLHTTTERYKRIVSGHAVRSKPLCPASMYMESAIMGTEQLGASLVGKTITFENVSFTKPLGCDENLEVYVNLEQNTAAGEEAWHYAVQSGGKGSHSEGDFFATSGEMADIQLYEMLIADKIEALRNDVDAERLRTATAYSIFSRVVEYSDLLRGISSITMGTRQALAQIKVPKSTFEAQESTVSDFYDAITLDTFIQVLGLLINSDNDSSADDEIYVASSIGKMVVSPTEFKKHATWNVYATYSASDSKASSGAVFVFSEDRKLVSFATKIQFMRIKAAKLEKVLESANPGSKTKSTNGNALPSVPRSVPAGPTSAPQQVAPTTMPSAPAPVPVVAAGASPSKIADLKSLISVYTGVPVDEMQDNQNFGDMGLDSLASMELADEMESKLGLKVETEDLLLGSVGSLIKLLAPSSGPTAALTEGLVESYDTCSESSDSIRNSTGFHTTIPATPAELHSNPPDSLDGSTVWTKPKHSLSARFKLDTMVYKEAEGIDIPADVYVPQEPPQQPMPVALMIHGGGHLTLSRRAVRPTQTKYLLSQGILPVSIDYRLCPQVNVIDGPVADTRDACEWAQRDLPKIMASRNIEVDASKLIVIGWSTGGTLAMTTAWTLPSAGLPPPVAILSFYCPVNYDPEAPIQMGEEHEKRNMSLSEIRRLLGPQPATSHASHTTDTTKLGWVQANDPRSELVLALIKEPRGMSLLFNGLPPTGEELPVPDAERAAALSPLVQVRKGNYDVPTYLIFGDEDEIAPFGKAVEFAQALKDAGVKSGFLPIKGGKHIFDLGISPGSKAWDESIGPGYDFLLGELENAHRRCRDV.

Positions 1-21 (MTLIQTKHSASAAVFSPQSTA) are disordered. An N-terminal acylcarrier protein transacylase domain (SAT) region spans residues 14 to 260 (VFSPQSTAPK…HNSRNTELAQ (247 aa)). One can recognise a Ketosynthase family 3 (KS3) domain in the interval 381–805 (PDSIAIVGSA…GSNSALICSE (425 aa)). Catalysis depends on for beta-ketoacyl synthase activity residues cysteine 553, histidine 689, and histidine 728. The tract at residues 908 to 1210 (LTFSGQSRTT…ANPSAHTFQA (303 aa)) is malonyl-CoA:ACP transacylase (MAT) domain. Serine 995 functions as the For acyl/malonyl transferase activity in the catalytic mechanism. Residues 1280–1406 (PKKVQQLVTL…GDFFATSGEM (127 aa)) form an N-terminal hotdog fold region. The 302-residue stretch at 1280 to 1581 (PKKVQQLVTL…FMRIKAAKLE (302 aa)) folds into the PKS/mFAS DH domain. The tract at residues 1285–1580 (QLVTLKKTEG…QFMRIKAAKL (296 aa)) is product template (PT) domain. The active-site Proton acceptor; for dehydratase activity is the histidine 1315. Positions 1428-1581 (DAERLRTATA…FMRIKAAKLE (154 aa)) are C-terminal hotdog fold. Residue aspartate 1492 is the Proton donor; for dehydratase activity of the active site. Residues 1587 to 1624 (ANPGSKTKSTNGNALPSVPRSVPAGPTSAPQQVAPTTM) form a disordered region. Residues 1588 to 1600 (NPGSKTKSTNGNA) are compositionally biased toward polar residues. The 85-residue stretch at 1640-1724 (PSKIADLKSL…PTAALTEGLV (85 aa)) folds into the Carrier domain. Position 1674 is an O-(pantetheine 4'-phosphoryl)serine (serine 1674). Positions 1734–1748 (SDSIRNSTGFHTTIP) are enriched in polar residues. Residues 1734-1767 (SDSIRNSTGFHTTIPATPAELHSNPPDSLDGSTV) are disordered. Residues 1777–2107 (ARFKLDTMVY…YDFLLGELEN (331 aa)) are thioesterase (TE) domain. Catalysis depends on for thioesterase activity residues serine 1897 and aspartate 2045.

The catalysed reaction is 3 malonyl-CoA + acetyl-CoA + 2 H(+) = orsellinate + 3 CO2 + 4 CoA. The protein operates within secondary metabolite biosynthesis; terpenoid biosynthesis. Its function is as follows. Non-reducing polyketide synthase; part of the asc-1 gene cluster that mediates the biosynthesis of both ascochlorin and ascofuranone, a strong inhibitor of cyanide-insensitive alternative oxidases and a promising drug candidate against African trypanosomiasis. The first step in the pathway is performed by the non-reducing polyketide synthase ascC that produces orsellinic acid by condensing acetyl-CoA with 3 malonyl-CoA units. Orsellinic acid is then prenylated by the prenyltransferase ascA to yield ilicicolinic acid B. Ilicicolinic acid B is further reduced to ilicicolin B by the reductase ascB. The halogenase ascD then chlorinates ilicicolin B to produce ilicicolin A which is converted to ilicicolin A epoxide by the cytochrome P450 monooxygenase ascE that catalyzes stereoselective epoxidation of the terminal double bond of the prenyl group. Ilicicolin A epoxide is the last common precursor for the biosynthesis of ascofuranone and ascochlorin. The terpene cyclase ascF produces a monocyclic terpene, and the cyclization reaction is proposed to be initiated by protonation of the terminal epoxide of ilicicolin A epoxide to generate a monocyclic tertiarycation, which is followed by a series of hydride and methyl shifts with abstraction of proton, leading to the formation of the (14S,15R,19R)-trimethylcyclohexanone ring structure of ilicicolin C, which is finally reduced to ascochlorin by the dehydrogenase ascG. On the other hand, ilicicolin A epoxide is hydroxylated by the cytochrome P450 monooxygenase ascH, and the resultant product is cyclized by the terpene cyclase ascI to ascofuranol via protonation-initiated epoxide ring opening, which facilitates the 6-endo-tet cyclization to form the tetrahy-drofuran ring. Finally, ascofuranol is oxidized into ascofuranone by ascJ. The polypeptide is Non-reducing polyketide synthase ascC (Acremonium egyptiacum (Oospora egyptiaca)).